The sequence spans 375 residues: OVARIAN TUMOR DOMAIN-containing deubiquitinating enzyme 7 (375 aa).

Residues 1-18 show a composition bias toward basic residues; sequence MAKTKQQKSKPKKQPHQK. Positions 1 to 23 are disordered; sequence MAKTKQQKSKPKKQPHQKQGKDC. The 125-residue stretch at 37–161 folds into the OTU domain; that stretch reads LKIIQVTADG…GEHYNSVRSK (125 aa). Aspartate 45 is a catalytic residue. Cysteine 48 (nucleophile) is an active-site residue. Histidine 154 is a catalytic residue. Residues 202-250 form the UBA-like domain; sequence HVNAGAIKVVMSGSCCDNTEKAEQVLLQVNGDVDAAIEFLIADQGMESL. 2 stretches are compositionally biased toward polar residues: residues 251–264 and 290–305; these read TENDTETASASDTI and ASGNNSETVQAKCTTQ. The segment at 251–306 is disordered; the sequence is TENDTETASASDTINPKHASDSPMENTEQAREELIEEESASGNNSETVQAKCTTQT. Residues 308-315 carry the Nuclear localization signal motif; sequence DKKIPRNK.

This sequence belongs to the peptidase C85 family.

Its subcellular location is the nucleus. It carries out the reaction Thiol-dependent hydrolysis of ester, thioester, amide, peptide and isopeptide bonds formed by the C-terminal Gly of ubiquitin (a 76-residue protein attached to proteins as an intracellular targeting signal).. Functionally, hydrolase that can remove conjugated ubiquitin from proteins in vitro and may therefore play an important regulatory role at the level of protein turnover by preventing degradation. Cysteine protease with a preference for 'Lys-63' over 'Lys-48' over 'Met-1' -linked ubiquitin (UB) tetramers as substrates. Also cleaves RUB-GST fusion. This is OVARIAN TUMOR DOMAIN-containing deubiquitinating enzyme 7 from Arabidopsis thaliana (Mouse-ear cress).